Reading from the N-terminus, the 442-residue chain is Plasmalemma vesicle-associated protein (442 aa).

Residues 1 to 27 lie on the Cytoplasmic side of the membrane; that stretch reads MGLAMEHGGSYARAGGSSRGCWYYLRY. Residues 28-48 form a helical; Signal-anchor for type II membrane protein membrane-spanning segment; the sequence is FFLFVSLIQFLIILGLVLFMV. At 49-442 the chain is on the extracellular side; it reads YGNVHVSTES…AGIPVAPSSG (394 aa). The stretch at 57–77 forms a coiled coil; the sequence is ESNLQATERRAEGLYSQLLGL. 4 N-linked (GlcNAc...) asparagine glycosylation sites follow: asparagine 83, asparagine 89, asparagine 113, and asparagine 151. 2 coiled-coil regions span residues 202–225 and 280–387; these read KTRELQHQERQLAKEQLQKVQALC and SSKV…SALD. Disordered stretches follow at residues 301-328 and 394-418; these read NSDLQRQKLEAQQGLRASQEAKQKVEKE and SQPMMPVSRPMGPVPNPQPIDPASL. Over residues 319-328 the composition is skewed to basic and acidic residues; the sequence is QEAKQKVEKE.

In terms of assembly, homodimer. Expressed in lung, kidney, heart, aorta, placenta, muscle, pituitary gland, adrenals, mammary gland, bladder, lymph node, bone marrow, trachea, digestive tract, liver and tumor-associated endothelium.

Its subcellular location is the cell membrane. It localises to the membrane. The protein localises to the caveola. The protein resides in the cytoplasm. It is found in the perinuclear region. Endothelial cell-specific membrane protein involved in the formation of the diaphragms that bridge endothelial fenestrae. It is also required for the formation of stomata of caveolae and transendothelial channels. Functions in microvascular permeability, endothelial fenestrae contributing to the passage of water and solutes and regulating transcellular versus paracellular flow in different organs. Plays a specific role in embryonic development. This is Plasmalemma vesicle-associated protein (PLVAP) from Homo sapiens (Human).